An 82-amino-acid chain; its full sequence is Cobrotoxin-b (82 aa).

The N-terminal stretch at 1–21 (MKTLLLTLLVVTIVCLDLGYT) is a signal peptide. Disulfide bonds link Cys-24/Cys-44, Cys-38/Cys-61, Cys-63/Cys-74, and Cys-75/Cys-80.

This sequence belongs to the three-finger toxin family. Short-chain subfamily. Type I alpha-neurotoxin sub-subfamily. In terms of tissue distribution, expressed by the venom gland.

The protein resides in the secreted. Binds to muscle nicotinic acetylcholine receptor (nAChR) and inhibit acetylcholine from binding to the receptor, thereby impairing neuromuscular transmission. Produces peripheral paralysis by blocking neuromuscular transmission at the postsynaptic site. Has a lower toxicity than cobrotoxin. This chain is Cobrotoxin-b, found in Naja atra (Chinese cobra).